We begin with the raw amino-acid sequence, 158 residues long: 2-C-methyl-D-erythritol 2,4-cyclodiphosphate synthase (158 aa).

Residues aspartate 8 and histidine 10 each coordinate a divalent metal cation. 4-CDP-2-C-methyl-D-erythritol 2-phosphate contacts are provided by residues aspartate 8 to histidine 10 and histidine 34 to serine 35. Histidine 42 is an a divalent metal cation binding site. 4-CDP-2-C-methyl-D-erythritol 2-phosphate-binding positions include aspartate 56–glycine 58, phenylalanine 61–aspartate 65, alanine 100–alanine 106, threonine 132–glutamate 135, phenylalanine 139, and arginine 142.

It belongs to the IspF family. In terms of assembly, homotrimer. Requires a divalent metal cation as cofactor.

The catalysed reaction is 4-CDP-2-C-methyl-D-erythritol 2-phosphate = 2-C-methyl-D-erythritol 2,4-cyclic diphosphate + CMP. It participates in isoprenoid biosynthesis; isopentenyl diphosphate biosynthesis via DXP pathway; isopentenyl diphosphate from 1-deoxy-D-xylulose 5-phosphate: step 4/6. In terms of biological role, involved in the biosynthesis of isopentenyl diphosphate (IPP) and dimethylallyl diphosphate (DMAPP), two major building blocks of isoprenoid compounds. Catalyzes the conversion of 4-diphosphocytidyl-2-C-methyl-D-erythritol 2-phosphate (CDP-ME2P) to 2-C-methyl-D-erythritol 2,4-cyclodiphosphate (ME-CPP) with a corresponding release of cytidine 5-monophosphate (CMP). This chain is 2-C-methyl-D-erythritol 2,4-cyclodiphosphate synthase, found in Sodalis glossinidius (strain morsitans).